Here is a 75-residue protein sequence, read N- to C-terminus: Protein B7 (75 aa).

This is Protein B7 (B7) from Human herpesvirus 6B (strain Z29) (HHV-6 variant B).